Here is a 654-residue protein sequence, read N- to C-terminus: MEDIKKCGYLRKQKSMRKRYFVLRCPGTRGPARLEYYENEKKFRVAEGSGGPRGVLNLEEAFGVNKRSDAKKRHLLVIYTRDGGLGVSADGEEEQDEWYQAILEVQAQARALSSSPDAPAWPGPAFREVWQVSVRPRGLGQTRNLSGIYRLCLAERTLGLLRLRSENPSVTLQLMNVRRCGHSDNYFFVEVGRSAVTGPGELWMQVEDSVVAQNMHETILEAMKSLSEEFRPRTKSQSLSSTPISVPSRRHHPNPPPPSQVGISRRSRAETPIENSPVPKPHSLSKDYSVQSPEEEEEEKGARVETNESSADYGSASSDEYGSSPGVLEAPVFLPPSPGPRETNYISMALYGRRSLVMEPISTNANVPAEEGSRLTLFQEEDNYAMMGQREPRQETGYMPMLPGSNRSQDYMPMTPTSISPPAPVEMAGYVMMSPLGSCSPEIERLSWPPSQEVSAGSSDSHASDYMNMWSLSRSASSTPPPQEAFLSSPGGPCRVPASYRSLPRSYKMEPQPSARASCSSSSDSLEEVNAGKNRRPLSISIDSWNTGTLSGNYRRPPSPGEYVSIHFRAPPEEDLREGSHRCPKRVRFHGGAALGDAQRGLHGNGLCASQNFTTSCKNERGTGNERGKCLQTCGEITAGLGEDFLGEGLLGCR.

A PH domain is found at 3-107 (DIKKCGYLRK…WYQAILEVQA (105 aa)). Position 36 is a phosphotyrosine (Y36). The region spanning 126–230 (FREVWQVSVR…EAMKSLSEEF (105 aa)) is the IRS-type PTB domain. Positions 228-329 (EEFRPRTKSQ…EYGSSPGVLE (102 aa)) are disordered. The span at 235–245 (KSQSLSSTPIS) shows a compositional bias: polar residues. Residue S276 is modified to Phosphoserine. A compositionally biased stretch (polar residues) spans 307–321 (NESSADYGSASSDEY). Phosphotyrosine; by INSR is present on Y345. 6 consecutive short sequence motifs (YXXM motif) follow at residues 345–348 (YISM), 384–387 (YAMM), 398–401 (YMPM), 411–414 (YMPM), 430–433 (YVMM), and 466–469 (YMNM). 2 positions are modified to phosphotyrosine; by INSR: Y398 and Y411. The residue at position 430 (Y430) is a Phosphotyrosine. 2 disordered regions span residues 473 to 494 (SRSASSTPPPQEAFLSSPGGPC) and 507 to 532 (YKMEPQPSARASCSSSSDSLEEVNAG). Positions 514–524 (SARASCSSSSD) are enriched in low complexity. Y563 is modified (phosphotyrosine; by INSR).

Interacts with the NPXY motif of tyrosine-phosphorylated igf1r and insr via the PTB domain. Binds to phosphatidylinositol 3-kinase p85 subunit via the phosphorylated YXXM motifs.

Its function is as follows. May mediate the control of various cellular processes by insulin. When phosphorylated by the insulin receptor binds specifically to various cellular proteins containing SH2 domains such as phosphatidylinositol 3-kinase p85 subunit or grb2. Activates phosphatidylinositol 3-kinase when bound to the regulatory p85 subunit. This is Insulin receptor substrate 1 from Xenopus tropicalis (Western clawed frog).